Here is a 341-residue protein sequence, read N- to C-terminus: UDP-3-O-acylglucosamine N-acyltransferase (341 aa).

Residue H237 is the Proton acceptor of the active site.

This sequence belongs to the transferase hexapeptide repeat family. LpxD subfamily. In terms of assembly, homotrimer.

The enzyme catalyses a UDP-3-O-[(3R)-3-hydroxyacyl]-alpha-D-glucosamine + a (3R)-hydroxyacyl-[ACP] = a UDP-2-N,3-O-bis[(3R)-3-hydroxyacyl]-alpha-D-glucosamine + holo-[ACP] + H(+). It participates in bacterial outer membrane biogenesis; LPS lipid A biosynthesis. In terms of biological role, catalyzes the N-acylation of UDP-3-O-acylglucosamine using 3-hydroxyacyl-ACP as the acyl donor. Is involved in the biosynthesis of lipid A, a phosphorylated glycolipid that anchors the lipopolysaccharide to the outer membrane of the cell. The sequence is that of UDP-3-O-acylglucosamine N-acyltransferase from Azoarcus sp. (strain BH72).